The following is a 377-amino-acid chain: Alanine dehydrogenase (377 aa).

2 residues coordinate substrate: Arg15 and Lys74. His95 acts as the Proton donor/acceptor in catalysis. Residues Ser133, Asp197, Arg202, Ser219, 238-239, 266-269, and 304-307 each bind NAD(+); these read VL, VAID, and VGNM. Asp269 acts as the Proton donor/acceptor in catalysis.

The protein belongs to the AlaDH/PNT family. In terms of assembly, homohexamer.

It carries out the reaction L-alanine + NAD(+) + H2O = pyruvate + NH4(+) + NADH + H(+). The protein operates within organosulfur degradation; alkanesulfonate degradation. In terms of biological role, involved in an anaerobic respiration pathway that converts the sulfonate taurine (2-aminoethanesulfonate) to ammonia, acetate and sulfide. Acts as an alanine dehydrogenase that regenerates pyruvate, the amino group acceptor for the taurine--pyruvate aminotransferase enzyme, and liberates ammonia. The protein is Alanine dehydrogenase of Bilophila wadsworthia (strain 3_1_6).